The primary structure comprises 240 residues: Ribonuclease PH (240 aa).

Residues R87 and 125 to 127 (GTR) each bind phosphate.

This sequence belongs to the RNase PH family. In terms of assembly, homohexameric ring arranged as a trimer of dimers.

The enzyme catalyses tRNA(n+1) + phosphate = tRNA(n) + a ribonucleoside 5'-diphosphate. In terms of biological role, phosphorolytic 3'-5' exoribonuclease that plays an important role in tRNA 3'-end maturation. Removes nucleotide residues following the 3'-CCA terminus of tRNAs; can also add nucleotides to the ends of RNA molecules by using nucleoside diphosphates as substrates, but this may not be physiologically important. Probably plays a role in initiation of 16S rRNA degradation (leading to ribosome degradation) during starvation. This chain is Ribonuclease PH, found in Pseudomonas fluorescens (strain Pf0-1).